Here is a 125-residue protein sequence, read N- to C-terminus: SKP1-like protein 7 (125 aa).

The interval M94 to E125 is interaction with the F-box domain of F-box proteins.

The protein belongs to the SKP1 family. As to quaternary structure, part of a SCF (SKP1-cullin-F-box) protein ligase complex. As to expression, restricted to siliques.

It is found in the nucleus. The protein operates within protein modification; protein ubiquitination. In terms of biological role, involved in ubiquitination and subsequent proteasomal degradation of target proteins. Together with CUL1, RBX1 and a F-box protein, it forms a SCF E3 ubiquitin ligase complex. The functional specificity of this complex depends on the type of F-box protein. In the SCF complex, it serves as an adapter that links the F-box protein to CUL1. In Arabidopsis thaliana (Mouse-ear cress), this protein is SKP1-like protein 7 (ASK7).